Consider the following 210-residue polypeptide: Probable GTP-binding protein EngB (210 aa).

The 175-residue stretch at 25–199 (TGIEVAFAGR…RQKLDTWFNE (175 aa)) folds into the EngB-type G domain. Residues 33 to 40 (GRSNAGKS), 60 to 64 (GRTQL), 78 to 81 (DLPG), 145 to 148 (TKAD), and 178 to 180 (FSS) each bind GTP. 2 residues coordinate Mg(2+): S40 and T62.

Belongs to the TRAFAC class TrmE-Era-EngA-EngB-Septin-like GTPase superfamily. EngB GTPase family. Mg(2+) serves as cofactor.

Functionally, necessary for normal cell division and for the maintenance of normal septation. The chain is Probable GTP-binding protein EngB from Escherichia coli O157:H7.